Here is a 634-residue protein sequence, read N- to C-terminus: Threonine--tRNA ligase (634 aa).

Positions 1–61 constitute a TGS domain; that stretch reads MINITLPDGS…DHDASLRIIT (61 aa). Residues 243 to 534 form a catalytic region; the sequence is DHRRIGKAQD…LIEHHAGAFP (292 aa). Residues cysteine 334, histidine 385, and histidine 511 each contribute to the Zn(2+) site.

It belongs to the class-II aminoacyl-tRNA synthetase family. Homodimer. Zn(2+) serves as cofactor.

Its subcellular location is the cytoplasm. The enzyme catalyses tRNA(Thr) + L-threonine + ATP = L-threonyl-tRNA(Thr) + AMP + diphosphate + H(+). Its function is as follows. Catalyzes the attachment of threonine to tRNA(Thr) in a two-step reaction: L-threonine is first activated by ATP to form Thr-AMP and then transferred to the acceptor end of tRNA(Thr). Also edits incorrectly charged L-seryl-tRNA(Thr). This Xanthomonas euvesicatoria pv. vesicatoria (strain 85-10) (Xanthomonas campestris pv. vesicatoria) protein is Threonine--tRNA ligase.